A 494-amino-acid chain; its full sequence is 4-trimethylaminobutyraldehyde dehydrogenase (494 aa).

Residue Ser2 is modified to N-acetylserine. Residue Lys30 is modified to N6-acetyllysine; alternate. Residue Lys30 is modified to N6-succinyllysine; alternate. Lys59 is subject to N6-succinyllysine. NAD(+) contacts are provided by residues Lys180 and 232–236; that span reads GSVPT. Residue Glu254 is the Proton acceptor of the active site. Cys288 (nucleophile) is an active-site residue. Lys298 is modified (N6-acetyllysine). An NAD(+)-binding site is contributed by Glu391.

This sequence belongs to the aldehyde dehydrogenase family. Homotetramer. As to expression, detected in lever (at protein level).

The protein resides in the cytoplasm. The protein localises to the cytosol. It catalyses the reaction 4-(trimethylamino)butanal + NAD(+) + H2O = 4-(trimethylamino)butanoate + NADH + 2 H(+). It carries out the reaction an aldehyde + NAD(+) + H2O = a carboxylate + NADH + 2 H(+). The catalysed reaction is 4-aminobutanal + NAD(+) + H2O = 4-aminobutanoate + NADH + 2 H(+). The enzyme catalyses formaldehyde + NAD(+) + H2O = formate + NADH + 2 H(+). It catalyses the reaction acetaldehyde + NAD(+) + H2O = acetate + NADH + 2 H(+). It carries out the reaction imidazole-4-acetaldehyde + NAD(+) + H2O = imidazole-4-acetate + NADH + 2 H(+). The catalysed reaction is acrolein + NAD(+) + H2O = acrylate + NADH + 2 H(+). The enzyme catalyses (5-hydroxyindol-3-yl)acetaldehyde + NAD(+) + H2O = (5-hydroxyindol-3-yl)acetate + NADH + 2 H(+). It catalyses the reaction 3,4-dihydroxyphenylacetaldehyde + NAD(+) + H2O = 3,4-dihydroxyphenylacetate + NADH + 2 H(+). It carries out the reaction spermine monoaldehyde + NAD(+) + H2O = N-(2-carboxyethyl)spermidine + NADH + 2 H(+). The catalysed reaction is propanal + NAD(+) + H2O = propanoate + NADH + 2 H(+). The enzyme catalyses butanal + NAD(+) + H2O = butanoate + NADH + 2 H(+). It catalyses the reaction pentanal + NAD(+) + H2O = pentanoate + NADH + 2 H(+). It carries out the reaction hexanal + NAD(+) + H2O = hexanoate + NADH + 2 H(+). Its pathway is amine and polyamine biosynthesis; carnitine biosynthesis. Functionally, converts gamma-trimethylaminobutyraldehyde into gamma-butyrobetaine with high efficiency (in vitro). Can catalyze the irreversible oxidation of a broad range of aldehydes to the corresponding acids in an NAD-dependent reaction, but with low efficiency. Catalyzes the oxidation of aldehydes arising from biogenic amines and polyamines. The protein is 4-trimethylaminobutyraldehyde dehydrogenase (Aldh9a1) of Rattus norvegicus (Rat).